The chain runs to 458 residues: Cobyrinate a,c-diamide synthase (458 aa).

The 192-residue stretch at 254–445 folds into the GATase cobBQ-type domain; that stretch reads KIGVIRDQVF…IHVHFLSDKS (192 aa). The Nucleophile role is filled by Cys-335.

It belongs to the CobB/CbiA family. It depends on Mg(2+) as a cofactor.

It catalyses the reaction cob(II)yrinate + 2 L-glutamine + 2 ATP + 2 H2O = cob(II)yrinate a,c diamide + 2 L-glutamate + 2 ADP + 2 phosphate + 2 H(+). Its pathway is cofactor biosynthesis; adenosylcobalamin biosynthesis; cob(II)yrinate a,c-diamide from sirohydrochlorin (anaerobic route): step 10/10. Catalyzes the ATP-dependent amidation of the two carboxylate groups at positions a and c of cobyrinate, using either L-glutamine or ammonia as the nitrogen source. The protein is Cobyrinate a,c-diamide synthase of Archaeoglobus fulgidus (strain ATCC 49558 / DSM 4304 / JCM 9628 / NBRC 100126 / VC-16).